The chain runs to 346 residues: MICYSFAKNVTFAFLIILQNFFSQHDEEYKYNYTCITPTVRKAQRLESVINGIMLTLILPVSTVVICTLLIYYKWTKQTITSPYLITLFISDSLHSLTVLLLTLNREALTNLNQALCQCVLFVYSASCTYSLCMLAVISTIRYRTLQRRTLNDKNNNHIKRNVGILFLSSAMCAIPAVLYVQVEKKKGNYGKCNIHISTQKAYDLFIGIKIVYCFLWGIFPTVIFSYFYVIFGKTLRALTQSKHNKTLSFISLLILSFLCIQIPNLLVMSVEIFFLYIANTSCLGTIQREIVQIISRLMPEIHCLSNPLVYAFTRTDFRLRFYDFIKCNLCNSSLKRKRNPLTIKN.

The Extracellular segment spans residues 1 to 31; that stretch reads MICYSFAKNVTFAFLIILQNFFSQHDEEYKY. Residues 32 to 56 form a helical membrane-spanning segment; that stretch reads NYTCITPTVRKAQRLESVINGIMLT. The Cytoplasmic portion of the chain corresponds to 57 to 83; sequence LILPVSTVVICTLLIYYKWTKQTITSP. Residues 84–108 traverse the membrane as a helical segment; the sequence is YLITLFISDSLHSLTVLLLTLNREA. Residues 109 to 115 lie on the Extracellular side of the membrane; it reads LTNLNQA. A helical membrane pass occupies residues 116-142; the sequence is LCQCVLFVYSASCTYSLCMLAVISTIR. The Cytoplasmic segment spans residues 143–159; that stretch reads YRTLQRRTLNDKNNNHI. Residues 160–181 form a helical membrane-spanning segment; sequence KRNVGILFLSSAMCAIPAVLYV. Residues 182–208 are Extracellular-facing; it reads QVEKKKGNYGKCNIHISTQKAYDLFIG. The helical transmembrane segment at 209–229 threads the bilayer; it reads IKIVYCFLWGIFPTVIFSYFY. At 230 to 245 the chain is on the cytoplasmic side; sequence VIFGKTLRALTQSKHN. The chain crosses the membrane as a helical span at residues 246–272; sequence KTLSFISLLILSFLCIQIPNLLVMSVE. The Extracellular portion of the chain corresponds to 273–286; sequence IFFLYIANTSCLGT. A helical transmembrane segment spans residues 287–310; it reads IQREIVQIISRLMPEIHCLSNPLV. At 311 to 346 the chain is on the cytoplasmic side; that stretch reads YAFTRTDFRLRFYDFIKCNLCNSSLKRKRNPLTIKN.

Belongs to the G-protein coupled receptor 1 family.

It is found in the host cell membrane. The sequence is that of G-protein coupled receptor homolog U12 (U12) from Homo sapiens (Human).